The sequence spans 343 residues: Acetylglutamate kinase (343 aa).

Residues 98-99, Arg-120, and Asn-219 contribute to the substrate site; that span reads GG.

Belongs to the acetylglutamate kinase family. ArgB subfamily.

It is found in the cytoplasm. It carries out the reaction N-acetyl-L-glutamate + ATP = N-acetyl-L-glutamyl 5-phosphate + ADP. Its pathway is amino-acid biosynthesis; L-arginine biosynthesis; N(2)-acetyl-L-ornithine from L-glutamate: step 2/4. Catalyzes the ATP-dependent phosphorylation of N-acetyl-L-glutamate. This Frankia alni (strain DSM 45986 / CECT 9034 / ACN14a) protein is Acetylglutamate kinase.